The primary structure comprises 901 residues: HTH-type transcriptional regulator MalT (901 aa).

Ser-39–Thr-46 is an ATP binding site. Residues Glu-829–Leu-894 enclose the HTH luxR-type domain. Positions Asn-853–Arg-872 form a DNA-binding region, H-T-H motif.

It belongs to the MalT family. Monomer in solution. Oligomerizes to an active state in the presence of the positive effectors ATP and maltotriose.

With respect to regulation, activated by ATP and maltotriose, which are both required for DNA binding. Its function is as follows. Positively regulates the transcription of the maltose regulon whose gene products are responsible for uptake and catabolism of malto-oligosaccharides. Specifically binds to the promoter region of its target genes, recognizing a short DNA motif called the MalT box. In Escherichia coli (strain 55989 / EAEC), this protein is HTH-type transcriptional regulator MalT.